Consider the following 291-residue polypeptide: Glycinyltransferase (291 aa).

Glu243 is an active-site residue.

Belongs to the thymidine aminotransferase family.

The catalysed reaction is 5-phosphomethyl-dUMP in DNA + glycine = 5-N(alpha)-glycyl-dTMP in DNA + phosphate. Transfers glycine to 5-phosphomethyl-2'-deoxyuridine (5-PmdU) to produce 5-Nalpha-glycinylthymidine (Nalpha-GlyT) as a step in the pathway leading to thymidine hypermodifications in the viral genome. As a final result of the pathway of hypermodification, 5-aminoethyl-2'-deoxyuridine (5-NedU) substitutes for about 30% of thymidines in the viral DNA. These modifications probably prevent degradation of viral genome by the host restriction-modification antiviral defense system. The protein is Glycinyltransferase of Pseudomonas phage M6.